The primary structure comprises 232 residues: Ribonuclease 3 (232 aa).

In terms of domain architecture, RNase III spans 2–135; it reads IKALEDDLSQ…FIGALYLDQG (134 aa). Glu-48 contacts Mg(2+). Asp-52 is a catalytic residue. The Mg(2+) site is built by Asp-121 and Glu-124. Residue Glu-124 is part of the active site. A DRBM domain is found at 161-230; it reads DHKSELQELL…ANQALQLLRR (70 aa).

Belongs to the ribonuclease III family. In terms of assembly, homodimer. Requires Mg(2+) as cofactor.

It is found in the cytoplasm. It carries out the reaction Endonucleolytic cleavage to 5'-phosphomonoester.. Digests double-stranded RNA. Involved in the processing of primary rRNA transcript to yield the immediate precursors to the large and small rRNAs (23S and 16S). Processes some mRNAs, and tRNAs when they are encoded in the rRNA operon. Processes pre-crRNA and tracrRNA of type II CRISPR loci if present in the organism. The protein is Ribonuclease 3 of Pediococcus pentosaceus (strain ATCC 25745 / CCUG 21536 / LMG 10740 / 183-1w).